The chain runs to 262 residues: MDGCGTYLDTMRREAPLVQCITNFVAMNVVANVLLAAGASPAMVHDAEESGEFAAIAQALTINMGTPSPRWVEGMEAAARGATAAGRPWVLDPVAVGATAFRRGLGARLLALKPTVIRGNASEILALAGAETRGKGADSADPVAAAEAAAQRLAESSGAVVAVTGPVDFVTDGRRGIRCANGHPLMPRVTALGCSLTGIVGAFAAIRPPFEATAAALAFFGLAGEEAAKTATGPGSFQVAFLDALHALSPEALDRGARLEAA.

Position 43 (M43) interacts with substrate. The ATP site is built by R118 and T164. Residue A191 coordinates substrate.

It belongs to the Thz kinase family. Mg(2+) is required as a cofactor.

The catalysed reaction is 5-(2-hydroxyethyl)-4-methylthiazole + ATP = 4-methyl-5-(2-phosphooxyethyl)-thiazole + ADP + H(+). It functions in the pathway cofactor biosynthesis; thiamine diphosphate biosynthesis; 4-methyl-5-(2-phosphoethyl)-thiazole from 5-(2-hydroxyethyl)-4-methylthiazole: step 1/1. Functionally, catalyzes the phosphorylation of the hydroxyl group of 4-methyl-5-beta-hydroxyethylthiazole (THZ). This Cereibacter sphaeroides (strain KD131 / KCTC 12085) (Rhodobacter sphaeroides) protein is Hydroxyethylthiazole kinase.